The sequence spans 215 residues: Ras-related protein Rab-5A (215 aa).

GTP-binding residues include S29, A30, G32, K33, S34, S35, H46, E47, T52, and G78. S34 is a binding site for Mg(2+). Short sequence motifs (switch) lie at residues 44–56 and 77–93; these read QFHE…IGAA and AGQE…YRGA. Residue T52 participates in Mg(2+) binding. S84 carries the post-translational modification Phosphoserine. Residues N133, K134, D136, A164, and K165 each coordinate GTP. The disordered stretch occupies residues 185 to 215; the sequence is EPQNPGINCTRGRGVDLTEPTQPTRSQCCSN. The segment covering 203–215 has biased composition (polar residues); the sequence is EPTQPTRSQCCSN. S-geranylgeranyl cysteine attachment occurs at residues C212 and C213.

Belongs to the small GTPase superfamily. Rab family. As to quaternary structure, interacts with GDI1; this promotes dissociation from membranes; phosphorylation at Ser-84 disrupts this interaction. Interacts with GDI2; phosphorylation at Ser-84 disrupts the interaction. Interacts with SGSM1 and SGSM3. Interacts with PIK3CB. Interacts with RIN1 and GAPVD1, which regulate its pathway, probably by acting as a GEF. Interacts with RINL. Interacts with ALS2CL, SUN2, ZFYVE20 and RUFY1. Interacts with RABEP1; one RABEP1 homodimer binds two RAB5A chains, but at opposite sides of the dimer. Interacts with OCRL and INPP5F. May be a component of a complex composed of RAB5A, DYN2 and PIK3C3. Does not interact with the BLOC-3 complex (heterodimer of HPS1 and HPS4). Interacts with CLN5. Interacts with APPL2. Interacts with F8A1/F8A2/F8A3. Found in a complex with F8A1/F8A2/F8A3, HTT and RAB5A; mediates the recruitment of HTT by RAB5A onto early endosomes. Interacts with ATP9A. Interacts with PPP1R21; mediates the recruitment of FERRY complex by RAB5A onto early endosomes. Mg(2+) serves as cofactor. Post-translationally, phosphorylation of Ser-84 in the switch II region by LRRK2 prevents the association of RAB regulatory proteins, including RAB GDP dissociation inhibitors GDI1 and GDI2.

The protein localises to the cell membrane. It localises to the early endosome membrane. It is found in the melanosome. The protein resides in the cytoplasmic vesicle. Its subcellular location is the cell projection. The protein localises to the ruffle. It localises to the membrane. It is found in the cytoplasm. The protein resides in the cytosol. Its subcellular location is the phagosome membrane. The protein localises to the endosome membrane. It catalyses the reaction GTP + H2O = GDP + phosphate + H(+). With respect to regulation, regulated by guanine nucleotide exchange factors (GEFs) including RINL, which promote the exchange of bound GDP for free GTP. Regulated by GTPase activating proteins (GAPs) which increase the GTP hydrolysis activity. Inhibited by GDP dissociation inhibitors (GDIs). Functionally, the small GTPases Rab are key regulators of intracellular membrane trafficking, from the formation of transport vesicles to their fusion with membranes. Rabs cycle between an inactive GDP-bound form and an active GTP-bound form that is able to recruit to membranes different sets of downstream effectors directly responsible for vesicle formation, movement, tethering and fusion. RAB5A is required for the fusion of plasma membranes and early endosomes. Contributes to the regulation of filopodia extension. Required for the exosomal release of SDCBP, CD63, PDCD6IP and syndecan. Regulates maturation of apoptotic cell-containing phagosomes, probably downstream of DYN2 and PIK3C3. This chain is Ras-related protein Rab-5A (RAB5A), found in Sus scrofa (Pig).